Consider the following 262-residue polypeptide: Acyl-[acyl-carrier-protein]--UDP-N-acetylglucosamine O-acyltransferase (262 aa).

This sequence belongs to the transferase hexapeptide repeat family. LpxA subfamily. In terms of assembly, homotrimer.

It localises to the cytoplasm. It catalyses the reaction a (3R)-hydroxyacyl-[ACP] + UDP-N-acetyl-alpha-D-glucosamine = a UDP-3-O-[(3R)-3-hydroxyacyl]-N-acetyl-alpha-D-glucosamine + holo-[ACP]. The protein operates within glycolipid biosynthesis; lipid IV(A) biosynthesis; lipid IV(A) from (3R)-3-hydroxytetradecanoyl-[acyl-carrier-protein] and UDP-N-acetyl-alpha-D-glucosamine: step 1/6. Involved in the biosynthesis of lipid A, a phosphorylated glycolipid that anchors the lipopolysaccharide to the outer membrane of the cell. In Burkholderia thailandensis (strain ATCC 700388 / DSM 13276 / CCUG 48851 / CIP 106301 / E264), this protein is Acyl-[acyl-carrier-protein]--UDP-N-acetylglucosamine O-acyltransferase.